The sequence spans 400 residues: Eukaryotic translation initiation factor 3 subunit M (400 aa).

Positions 180 to 354 (LIAKIYSALV…QSFAVHRAQK (175 aa)) constitute a PCI domain.

This sequence belongs to the eIF-3 subunit M family. Component of the eukaryotic translation initiation factor 3 (eIF-3) complex.

The protein localises to the cytoplasm. Its function is as follows. Component of the eukaryotic translation initiation factor 3 (eIF-3) complex, which is involved in protein synthesis of a specialized repertoire of mRNAs and, together with other initiation factors, stimulates binding of mRNA and methionyl-tRNAi to the 40S ribosome. The eIF-3 complex specifically targets and initiates translation of a subset of mRNAs involved in cell proliferation. The chain is Eukaryotic translation initiation factor 3 subunit M from Yarrowia lipolytica (strain CLIB 122 / E 150) (Yeast).